Reading from the N-terminus, the 282-residue chain is tRNA pseudouridine synthase A (282 aa).

The Nucleophile role is filled by Asp-51. Tyr-109 provides a ligand contact to substrate.

This sequence belongs to the tRNA pseudouridine synthase TruA family. In terms of assembly, homodimer.

The catalysed reaction is uridine(38/39/40) in tRNA = pseudouridine(38/39/40) in tRNA. Formation of pseudouridine at positions 38, 39 and 40 in the anticodon stem and loop of transfer RNAs. The chain is tRNA pseudouridine synthase A from Delftia acidovorans (strain DSM 14801 / SPH-1).